Consider the following 151-residue polypeptide: Probable cGMP 3',5'-cyclic phosphodiesterase subunit delta (151 aa).

This sequence belongs to the PDE6D/unc-119 family. Interacts with Pde6.

The protein resides in the nucleus. The protein localises to the cytoplasm. The chain is Probable cGMP 3',5'-cyclic phosphodiesterase subunit delta from Drosophila willistoni (Fruit fly).